We begin with the raw amino-acid sequence, 518 residues long: Protein MGF 505-6R (518 aa).

ANK repeat units lie at residues 54 to 83 (SIND…NLHY), 129 to 158 (ECDF…LLNV), 261 to 290 (SVNR…IPRG), 292 to 322 (IERL…KVKN), and 324 to 351 (KKLV…NLVD).

Belongs to the asfivirus MGF 505 family.

Functionally, plays a role in virus cell tropism, and may be required for efficient virus replication in macrophages. The polypeptide is Protein MGF 505-6R (Ornithodoros (relapsing fever ticks)).